The following is a 256-amino-acid chain: Large ribosomal subunit protein bL21c (256 aa).

A chloroplast-targeting transit peptide spans 1-55; that stretch reads MASATLAFSCSSLCATLKLPQNLNPLLLNVPPLSKPFSGVVSPPSLSRLSLLPVA.

Component of the chloroplast large ribosomal subunit (LSU). Mature 70S chloroplast ribosomes of higher plants consist of a small (30S) and a large (50S) subunit. The 30S small subunit contains 1 molecule of ribosomal RNA (16S rRNA) and 24 different proteins. The 50S large subunit contains 3 rRNA molecules (23S, 5S and 4.5S rRNA) and 33 different proteins.

The protein resides in the plastid. It is found in the chloroplast. Functionally, component of the chloroplast ribosome (chloro-ribosome), a dedicated translation machinery responsible for the synthesis of chloroplast genome-encoded proteins, including proteins of the transcription and translation machinery and components of the photosynthetic apparatus. The chain is Large ribosomal subunit protein bL21c (RPL21) from Spinacia oleracea (Spinach).